A 91-amino-acid chain; its full sequence is Small ribosomal subunit protein bS20 (91 aa).

The tract at residues Met1–Arg25 is disordered. Residues Glu8–Arg20 are compositionally biased toward basic residues.

It belongs to the bacterial ribosomal protein bS20 family.

Functionally, binds directly to 16S ribosomal RNA. This chain is Small ribosomal subunit protein bS20, found in Myxococcus xanthus (strain DK1622).